We begin with the raw amino-acid sequence, 288 residues long: Diaminopimelate epimerase (288 aa).

N13, Q46, and N66 together coordinate substrate. Catalysis depends on C75, which acts as the Proton donor. Substrate is bound by residues 76-77 (GN), N166, N199, and 217-218 (ER). C226 acts as the Proton acceptor in catalysis. 227 to 228 (GT) lines the substrate pocket.

The protein belongs to the diaminopimelate epimerase family. Homodimer.

It is found in the cytoplasm. It carries out the reaction (2S,6S)-2,6-diaminopimelate = meso-2,6-diaminopimelate. Its pathway is amino-acid biosynthesis; L-lysine biosynthesis via DAP pathway; DL-2,6-diaminopimelate from LL-2,6-diaminopimelate: step 1/1. Catalyzes the stereoinversion of LL-2,6-diaminopimelate (L,L-DAP) to meso-diaminopimelate (meso-DAP), a precursor of L-lysine and an essential component of the bacterial peptidoglycan. This chain is Diaminopimelate epimerase, found in Cupriavidus necator (strain ATCC 17699 / DSM 428 / KCTC 22496 / NCIMB 10442 / H16 / Stanier 337) (Ralstonia eutropha).